A 384-amino-acid polypeptide reads, in one-letter code: Spermidine/putrescine import ATP-binding protein PotA (384 aa).

In terms of domain architecture, ABC transporter spans 6–238 (IAFKNVSKVF…PINHFVATFI (233 aa)). 40-47 (GASGSGKS) serves as a coordination point for ATP.

Belongs to the ABC transporter superfamily. Spermidine/putrescine importer (TC 3.A.1.11.1) family. As to quaternary structure, the complex is composed of two ATP-binding proteins (PotA), two transmembrane proteins (PotB and PotC) and a solute-binding protein (PotD).

The protein resides in the cell membrane. The enzyme catalyses ATP + H2O + polyamine-[polyamine-binding protein]Side 1 = ADP + phosphate + polyamineSide 2 + [polyamine-binding protein]Side 1.. Its function is as follows. Part of the ABC transporter complex PotABCD involved in spermidine/putrescine import. Responsible for energy coupling to the transport system. This is Spermidine/putrescine import ATP-binding protein PotA from Streptococcus agalactiae serotype Ia (strain ATCC 27591 / A909 / CDC SS700).